The following is a 371-amino-acid chain: Protein NDRG2 (371 aa).

The tract at residues 1-21 (MAELQEVQITEEKPLLPGQTP) is disordered. Position 2 is an N-acetylalanine (Ala-2). Position 20 is a phosphothreonine (Thr-20). 2 positions are modified to phosphoserine: Ser-326 and Ser-328. Thr-330 is modified (phosphothreonine). At Ser-332 the chain carries Phosphoserine. The residue at position 334 (Thr-334) is a Phosphothreonine. A disordered region spans residues 334 to 371 (TSAASVDGNRSRSRTLSQSSESGTLSSGPPGHTMEVSC). Phosphoserine is present on residues Ser-335, Ser-338, and Ser-344. Residues 347–361 (RTLSQSSESGTLSSG) are compositionally biased toward low complexity. Thr-348 is subject to Phosphothreonine. Phosphoserine occurs at positions 350, 352, 353, and 355. Thr-357 is subject to Phosphothreonine. The residue at position 370 (Ser-370) is a Phosphoserine.

This sequence belongs to the NDRG family. As to quaternary structure, interacts with CTNNB1. In terms of tissue distribution, highly expressed in brain, heart, skeletal muscle and salivary gland, and moderately in kidney and liver. Expressed in dendritic cells, but not in other blood cells. Expression levels are low in pancreatic and liver cancer tissues; absent in meningioma. Expressed in low-grade gliomas but present at low levels in glioblastoma. Isoform 1 and isoform 2 are present in brain neurons and up-regulated in Alzheimer disease (at protein level).

The protein resides in the cytoplasm. Its subcellular location is the perinuclear region. It is found in the cell projection. It localises to the growth cone. In terms of biological role, contributes to the regulation of the Wnt signaling pathway. Down-regulates CTNNB1-mediated transcriptional activation of target genes, such as CCND1, and may thereby act as tumor suppressor. May be involved in dendritic cell and neuron differentiation. The sequence is that of Protein NDRG2 (NDRG2) from Homo sapiens (Human).